The primary structure comprises 347 residues: uncharacterized protein (347 aa).

Helical transmembrane passes span G6 to T26, F37 to A57, F90 to F110, L114 to T134, I140 to A160, W182 to V202, G217 to S237, L262 to G282, S289 to T309, and L317 to L337.

The protein localises to the cell membrane. This is an uncharacterized protein from Bacillus subtilis (strain 168).